Consider the following 146-residue polypeptide: 3-dehydroquinate dehydratase (146 aa).

Residue Tyr-23 is the Proton acceptor of the active site. Substrate-binding residues include Asn-79, His-85, and Asp-92. His-105 serves as the catalytic Proton donor. Substrate is bound by residues 106–107 and Arg-116; that span reads IS.

The protein belongs to the type-II 3-dehydroquinase family. In terms of assembly, homododecamer.

It carries out the reaction 3-dehydroquinate = 3-dehydroshikimate + H2O. Its pathway is metabolic intermediate biosynthesis; chorismate biosynthesis; chorismate from D-erythrose 4-phosphate and phosphoenolpyruvate: step 3/7. Functionally, catalyzes a trans-dehydration via an enolate intermediate. In Variovorax paradoxus (strain S110), this protein is 3-dehydroquinate dehydratase.